The primary structure comprises 269 residues: UPF0329 protein ECU04_1660 (269 aa).

Over residues 1–12 the composition is skewed to basic and acidic residues; that stretch reads MEERERGKEKGS. The interval 1-74 is disordered; that stretch reads MEERERGKEK…SPKEKSKGEE (74 aa). Basic residues predominate over residues 13-23; sequence KGKGRKKRGKK. Residues 24–36 are compositionally biased toward basic and acidic residues; the sequence is GAGEAKEESKEED. Over residues 37-51 the composition is skewed to acidic residues; that stretch reads RGEEEEESVEADVPV.

This sequence belongs to the UPF0329 family.

This Encephalitozoon cuniculi (strain GB-M1) (Microsporidian parasite) protein is UPF0329 protein ECU04_1660.